The chain runs to 551 residues: Eukaryotic translation initiation factor 3 subunit D-2 (551 aa).

Positions 91–154 are disordered; sequence TKPYQRGRYR…RNTQNMGRRF (64 aa). Basic residues predominate over residues 95 to 113; the sequence is QRGRYRPNMRNNVRSRGRT. A compositionally biased stretch (low complexity) spans 121-136; it reads ASLGGSTAGGATASTT. Residues 290-304 are RNA gate; sequence QFDLLTVNETSVEPP. The interval 527–551 is disordered; sequence PENAFDSDGDEEEESSDPLSNSNDN. The span at 531-542 shows a compositional bias: acidic residues; sequence FDSDGDEEEESS.

Belongs to the eIF-3 subunit D family. In terms of assembly, component of the eukaryotic translation initiation factor 3 (eIF-3) complex. The eIF-3 complex interacts with pix.

The protein resides in the cytoplasm. Functionally, mRNA cap-binding component of the eukaryotic translation initiation factor 3 (eIF-3) complex, which is involved in protein synthesis of a specialized repertoire of mRNAs and, together with other initiation factors, stimulates binding of mRNA and methionyl-tRNAi to the 40S ribosome. The eIF-3 complex specifically targets and initiates translation of a subset of mRNAs involved in cell proliferation. In the eIF-3 complex, eif3d specifically recognizes and binds the 7-methylguanosine cap of a subset of mRNAs. This Drosophila melanogaster (Fruit fly) protein is Eukaryotic translation initiation factor 3 subunit D-2.